Reading from the N-terminus, the 277-residue chain is Serine protease 33 (277 aa).

The first 24 residues, 1-24, serve as a signal peptide directing secretion; it reads MRGASHLQILLLLVLGTRMQECAA. One can recognise a Peptidase S1 domain in the interval 34 to 276; it reads IVGGRDAQDG…YSPWIQARLS (243 aa). Residues C59 and C75 are joined by a disulfide bond. Catalysis depends on charge relay system residues H74 and D123. 3 disulfide bridges follow: C157–C234, C190–C213, and C224–C252. S228 (charge relay system) is an active-site residue.

The protein belongs to the peptidase S1 family. Not glycosylated. Widely expressed.

It localises to the secreted. Serine protease that has amidolytic activity, cleaving its substrates before Arg residues. The protein is Serine protease 33 (Prss33) of Mus musculus (Mouse).